The chain runs to 924 residues: Ubiquitin carboxyl-terminal hydrolase 5 (924 aa).

The region spanning Leu15–Ser145 is the DUSP domain. Polar residues predominate over residues Thr64 to Lys83. Positions Thr64–Arg87 are disordered. In terms of domain architecture, USP spans Thr317–Lys916. Residue Cys326 is the Nucleophile of the active site. The span at Arg648–Ser667 shows a compositional bias: basic and acidic residues. The disordered stretch occupies residues Arg648–Ser690. His874 acts as the Proton acceptor in catalysis.

Belongs to the peptidase C19 family.

It carries out the reaction Thiol-dependent hydrolysis of ester, thioester, amide, peptide and isopeptide bonds formed by the C-terminal Gly of ubiquitin (a 76-residue protein attached to proteins as an intracellular targeting signal).. Functionally, recognizes and hydrolyzes the peptide bond at the C-terminal Gly of ubiquitin. Involved in the processing of poly-ubiquitin precursors as well as that of ubiquitinated proteins. The polypeptide is Ubiquitin carboxyl-terminal hydrolase 5 (UBP5) (Arabidopsis thaliana (Mouse-ear cress)).